The primary structure comprises 842 residues: Amyloid-beta A4 precursor protein-binding family A member 1 (842 aa).

3 disordered regions span residues 1 to 121, 238 to 349, and 366 to 439; these read MNHL…DESA, RLHH…EKRD, and KTRT…KESR. At Ser-82 the chain carries Phosphoserine. 2 stretches are compositionally biased toward basic and acidic residues: residues 106–115 and 240–258; these read DGYEAERAQD and HHYD…KEAE. 6 positions are modified to phosphoserine: Ser-246, Ser-250, Ser-252, Ser-267, Ser-284, and Ser-289. Position 309 is a phosphothreonine (Thr-309). Ser-317 and Ser-372 each carry phosphoserine. Phosphothreonine is present on Thr-375. Over residues 392 to 403 the composition is skewed to basic and acidic residues; it reads PTRDCDDQRPVD. Over residues 404–421 the composition is skewed to low complexity; it reads GDSPSPGSSSPLGAESSS. Residues Ser-406, Ser-408, Ser-413, and Ser-573 each carry the phosphoserine modification. The region spanning 460-648 is the PID domain; that stretch reads LIDGIIFAAN…LLNTQDMYND (189 aa). An autoinhibitory helix linker region spans residues 631–648; that stretch reads LSQKEYSDLLNTQDMYND. PDZ domains are found at residues 661–746 and 752–828; these read DVFI…NIVR and TVLI…MPAA.

As to quaternary structure, part of a multimeric complex containing STXBP1 and STX1A. Interacts with STXBP1. Component of the brain-specific heterotrimeric complex (LIN-10-LIN-2-LIN-7 complex) composed of at least APBA1, CASK, and LIN7, which associates with the motor protein KIF17 to transport vesicles along microtubules. Within the complex, interacts (via PDZ domain) with the motor protein KIF17; the interaction is direct and is required for association of KIF17 with the cargo that is to be transported. Binds to the cytoplasmic domain of amyloid protein (APP). Interacts (via PDZ 1 and 2 domains) with FSPB. Isoform 3 interacts (via its truncated PID domain) with active, GTP-bound RAB6A. Also interacts with GTP-bound RAB6B. As to expression, isoform 3 is expressed in brain.

It localises to the cytoplasm. It is found in the perinuclear region. The protein resides in the nucleus. The protein localises to the golgi apparatus. Putative function in synaptic vesicle exocytosis by binding to Munc18-1, an essential component of the synaptic vesicle exocytotic machinery. May modulate processing of the amyloid-beta precursor protein (APP) and hence formation of AAP-beta. Component of the LIN-10-LIN-2-LIN-7 complex, which associates with the motor protein KIF17 to transport vesicles containing N-methyl-D-aspartate (NMDA) receptor subunit NR2B along microtubules. This chain is Amyloid-beta A4 precursor protein-binding family A member 1, found in Mus musculus (Mouse).